The sequence spans 205 residues: Protein N-terminal glutamine amidohydrolase (205 aa).

Catalysis depends on residues Cys20, His74, and Asp90.

This sequence belongs to the NTAQ1 family. Monomer.

The enzyme catalyses N-terminal L-glutaminyl-[protein] + H2O = N-terminal L-glutamyl-[protein] + NH4(+). Functionally, mediates the side-chain deamidation of N-terminal glutamine residues to glutamate, an important step in N-end rule pathway of protein degradation. Conversion of the resulting N-terminal glutamine to glutamate renders the protein susceptible to arginylation, polyubiquitination and degradation as specified by the N-end rule. Does not act on substrates with internal or C-terminal glutamine and does not act on non-glutamine residues in any position. The chain is Protein N-terminal glutamine amidohydrolase (tun) from Drosophila pseudoobscura pseudoobscura (Fruit fly).